Consider the following 332-residue polypeptide: Ribosomal RNA small subunit methyltransferase C (332 aa).

The protein belongs to the methyltransferase superfamily. RsmC family. Monomer.

The protein resides in the cytoplasm. The catalysed reaction is guanosine(1207) in 16S rRNA + S-adenosyl-L-methionine = N(2)-methylguanosine(1207) in 16S rRNA + S-adenosyl-L-homocysteine + H(+). Its function is as follows. Specifically methylates the guanine in position 1207 of 16S rRNA in the 30S particle. This is Ribosomal RNA small subunit methyltransferase C from Pseudomonas paraeruginosa (strain DSM 24068 / PA7) (Pseudomonas aeruginosa (strain PA7)).